We begin with the raw amino-acid sequence, 165 residues long: K(+)/H(+) antiporter subunit KhtT (165 aa).

Residues 76–161 form the RCK C-terminal domain; that stretch reads LESIEMAFSD…LKKLIHDFLS (86 aa).

As to quaternary structure, the transporter is composed of the integral membrane protein KhtU and the regulatory protein KhtT.

The protein localises to the cell membrane. Binds cyclic di-AMP (c-di-AMP), which may regulate the activity. Its function is as follows. Required for activity of the potassium/proton antiporter KhtU. Involved in protection of the cell from methylglyoxal, a toxic by-product of glycolysis. The polypeptide is K(+)/H(+) antiporter subunit KhtT (Bacillus subtilis (strain 168)).